Consider the following 160-residue polypeptide: Transcription antitermination protein NusB (160 aa).

Belongs to the NusB family.

Involved in transcription antitermination. Required for transcription of ribosomal RNA (rRNA) genes. Binds specifically to the boxA antiterminator sequence of the ribosomal RNA (rrn) operons. This chain is Transcription antitermination protein NusB, found in Nitrobacter hamburgensis (strain DSM 10229 / NCIMB 13809 / X14).